The sequence spans 125 residues: uncharacterized protein (125 aa).

This is an uncharacterized protein from Microplitis demolitor (Parasitoid wasp).